Consider the following 152-residue polypeptide: Transcriptional regulator MraZ (152 aa).

SpoVT-AbrB domains are found at residues 5–52 (ASAI…PIHE) and 81–124 (AHEC…DEAA).

This sequence belongs to the MraZ family. As to quaternary structure, forms oligomers.

The protein localises to the cytoplasm. The protein resides in the nucleoid. In Shewanella pealeana (strain ATCC 700345 / ANG-SQ1), this protein is Transcriptional regulator MraZ.